Consider the following 65-residue polypeptide: Toxin NaTx-22 (65 aa).

The LCN-type CS-alpha/beta domain maps to 1–64; sequence KDGYPVIKTT…TYPIPGKTCK (64 aa). Disulfide bonds link cysteine 12–cysteine 63, cysteine 16–cysteine 39, cysteine 25–cysteine 44, and cysteine 29–cysteine 46.

This sequence belongs to the long (4 C-C) scorpion toxin superfamily. Sodium channel inhibitor family. In terms of tissue distribution, expressed by the venom gland.

The protein resides in the secreted. In terms of biological role, probable sodium channel inhibitor. In Centruroides sculpturatus (Arizona bark scorpion), this protein is Toxin NaTx-22.